Reading from the N-terminus, the 257-residue chain is MDETNGRRETHDFMNVNVESFSQLPFIRRTPPKEKAAIIRLFGQELVGDNSDNLSAEPSDHQTTTKNDESSENIKDKDKEKDKDKDKDNNNNRRFECHYCFRNFPTSQALGGHQNAHKRERQHAKRGSMTSYLHHHQPHDPHHIYGFLNNHHHRHYPSWTTEARSYYGGGGHQTPSYYSRNTLAPPSSNPPTINGSPLGLWRVPPSTSTNTIQGVYSSSPASAFRSHEQETNKEPNNWPYRLMKPNVQDHVSLDLHL.

Disordered regions lie at residues 48-92 (GDNS…NNNN), 108-128 (QALG…KRGS), and 214-238 (GVYS…PNNW). The segment covering 50–65 (NSDNLSAEPSDHQTTT) has biased composition (polar residues). Over residues 66–92 (KNDESSENIKDKDKEKDKDKDKDNNNN) the composition is skewed to basic and acidic residues. Residues 95 to 117 (FECHYCFRNFPTSQALGGHQNAH) form a C2H2-type zinc finger. The span at 115–126 (NAHKRERQHAKR) shows a compositional bias: basic residues.

Expressed in developing cauline leaves.

The protein localises to the nucleus. Functionally, probable transcription factor required for the initiation of inflorescence trichomes in response to gibberellin and cytokinin. Is not involved in the regulation of trichome branching. Is functionally equivalent to GIS2. Acts as a negative regulator of abscisic acid (ABA) signaling during germination and early seedling development. The chain is Zinc finger protein 8 from Arabidopsis thaliana (Mouse-ear cress).